Consider the following 126-residue polypeptide: MAIIGLGTDIVEIARIEGVVERSGERLAKRILSELEWEQYQQHEKPVRFLAKRFAVKEAAAKALGTGIRNGLAFNQFEVVNDALGKPILRLYGAAAALAQQLGATSLHVTLADERRYACATVILER.

2 residues coordinate Mg(2+): Asp-9 and Glu-58.

It belongs to the P-Pant transferase superfamily. AcpS family. Mg(2+) is required as a cofactor.

The protein resides in the cytoplasm. The catalysed reaction is apo-[ACP] + CoA = holo-[ACP] + adenosine 3',5'-bisphosphate + H(+). Transfers the 4'-phosphopantetheine moiety from coenzyme A to a Ser of acyl-carrier-protein. The chain is Holo-[acyl-carrier-protein] synthase from Photorhabdus laumondii subsp. laumondii (strain DSM 15139 / CIP 105565 / TT01) (Photorhabdus luminescens subsp. laumondii).